We begin with the raw amino-acid sequence, 825 residues long: Breast cancer anti-estrogen resistance protein 3 (825 aa).

Ala-2 carries the N-acetylalanine modification. 3 positions are modified to phosphoserine: Ser-32, Ser-78, and Ser-83. The interval 40–106 is disordered; it reads DAYQDVSIHG…DRHGETFTFR (67 aa). The segment covering 79–94 has biased composition (polar residues); that stretch reads PRQNSPVTQDGIQESP. The segment covering 95-106 has biased composition (basic and acidic residues); sequence WQDRHGETFTFR. The region spanning 154 to 253 is the SH2 domain; sequence WYHGRIPRQV…QSGAIIFQPI (100 aa). Phosphoserine occurs at positions 182 and 290. The residue at position 334 (Lys-334) is an N6-methyllysine. Residues Ser-358, Ser-363, and Ser-375 each carry the phosphoserine modification. Position 442 is an omega-N-methylarginine (Arg-442). Ser-471 is modified (phosphoserine). A Ras-GEF domain is found at 548 to 818; it reads DPKVIAQHVL…TALSRKLEPP (271 aa). The tract at residues 744–748 is mediates the interaction with BCAR1/p130CAS; it reads LATAR.

Part of a complex comprised of PTPRA, BCAR1, BCAR3 (via SH2 domain) and SRC; the formation of the complex is dependent on integrin mediated-tyrosine phosphorylation of PTPRA. Within the complex, interacts (via SH2 domain) with PTPRA (when phosphorylated on 'Tyr-798'). Interacts (via Ras-GEF domain) with BCAR1. Interacts (via Ras-GEF domain) with NEDD9. Interacts with PTK2/FAK1. Interacts with PTPN1. Interacts (via SH2 domain) with EGFR (when tyrosine-phosphorylated). In terms of processing, phosphorylated on tyrosine residues. As to expression, ubiquitously expressed. Found in several cancer cell lines, but not in nonmalignant breast tissue.

Its subcellular location is the cytoplasm. It is found in the cell junction. The protein localises to the focal adhesion. Acts as an adapter protein downstream of several growth factor receptors to promote cell proliferation, migration, and redistribution of actin fibers. Specifically involved in INS/insulin signaling pathway by mediating MAPK1/ERK2-MAPK3/ERK1 activation and DNA synthesis. Promotes insulin-mediated membrane ruffling. In response to vasoconstrictor peptide EDN1, involved in the activation of RAP1 downstream of PTK2B via interaction with phosphorylated BCAR1. Inhibits cell migration and invasion via regulation of TGFB-mediated matrix digestion, actin filament rearrangement, and inhibition of invadopodia activity. May inhibit TGFB-SMAD signaling, via facilitating BCAR1 and SMAD2 and/or SMAD3 interaction. Regulates EGF-induced DNA synthesis. Required for the maintenance of ocular lens morphology and structural integrity, potentially via regulation of focal adhesion complex signaling. Acts upstream of PTPRA to regulate the localization of BCAR1 and PTPRA to focal adhesions, via regulation of SRC-mediated phosphorylation of PTPRA. Positively regulates integrin-induced tyrosine phosphorylation of BCAR1. Acts as a guanine nucleotide exchange factor (GEF) for small GTPases RALA, RAP1A and RRAS. However, in a contrasting study, lacks GEF activity towards RAP1. This chain is Breast cancer anti-estrogen resistance protein 3 (BCAR3), found in Homo sapiens (Human).